The primary structure comprises 125 residues: Small ribosomal subunit protein uS17 (125 aa).

2 disordered regions span residues 1–21 (MSSS…VSSR) and 101–125 (VAAQ…APQA).

The protein belongs to the universal ribosomal protein uS17 family. In terms of assembly, part of the 30S ribosomal subunit.

One of the primary rRNA binding proteins, it binds specifically to the 5'-end of 16S ribosomal RNA. This Opitutus terrae (strain DSM 11246 / JCM 15787 / PB90-1) protein is Small ribosomal subunit protein uS17.